The chain runs to 507 residues: ATP synthase subunit alpha, chloroplastic (507 aa).

ATP is bound at residue 170 to 177 (GDRQTGKT). Thr-257 is subject to Phosphothreonine.

Belongs to the ATPase alpha/beta chains family. As to quaternary structure, F-type ATPases have 2 components, CF(1) - the catalytic core - and CF(0) - the membrane proton channel. CF(1) has five subunits: alpha(3), beta(3), gamma(1), delta(1), epsilon(1). CF(0) has four main subunits: a, b, b' and c.

It localises to the plastid. Its subcellular location is the chloroplast thylakoid membrane. It catalyses the reaction ATP + H2O + 4 H(+)(in) = ADP + phosphate + 5 H(+)(out). Produces ATP from ADP in the presence of a proton gradient across the membrane. The alpha chain is a regulatory subunit. The sequence is that of ATP synthase subunit alpha, chloroplastic from Lobularia maritima (Sweet alyssum).